Reading from the N-terminus, the 122-residue chain is Large ribosomal subunit protein uL14 (122 aa).

The protein belongs to the universal ribosomal protein uL14 family. Part of the 50S ribosomal subunit. Forms a cluster with proteins L3 and L19. In the 70S ribosome, L14 and L19 interact and together make contacts with the 16S rRNA in bridges B5 and B8.

In terms of biological role, binds to 23S rRNA. Forms part of two intersubunit bridges in the 70S ribosome. In Phenylobacterium zucineum (strain HLK1), this protein is Large ribosomal subunit protein uL14.